Consider the following 245-residue polypeptide: Vacuolar iron transporter (245 aa).

Residues 1 to 28 (MGEVGESEKYLLNRHKEHHFTAGETVRD) lie on the Cytoplasmic side of the membrane. Residues 29–49 (IIIGFSDGLTVPFALAAGLSG) traverse the membrane as a helical segment. The Vacuolar portion of the chain corresponds to 50–55 (ANASSS). Residues 56–76 (IILTAGIAEVAAGAISMGLGG) traverse the membrane as a helical segment. Residues 77-162 (YLAAKSEADH…PRRALQSALT (86 aa)) lie on the Cytoplasmic side of the membrane. 6 residues coordinate Fe cation: glutamate 94, glutamate 97, glutamate 105, glutamate 108, methionine 141, and glutamate 145. Residues 163 to 183 (IAISYVLSGLIPLLPYMFIPI) form a helical membrane-spanning segment. The Vacuolar segment spans residues 184 to 186 (AQK). The chain crosses the membrane as a helical span at residues 187-207 (AVVSSVIVTIFALLIFGFAKG). Residues 208-214 (YFTGNKP) lie on the Cytoplasmic side of the membrane. The helical transmembrane segment at 215-235 (VWSALQTALIGAIASAAAFGM) threads the bilayer. The Vacuolar portion of the chain corresponds to 236-245 (AKGCASSVFE).

This sequence belongs to the CCC1 family. In terms of tissue distribution, expressed in petal tissues, but not in other parts of the plant, such as leaves, roots, sepals and stems.

It localises to the vacuole membrane. The catalysed reaction is Fe(2+)(in) = Fe(2+)(out). Functionally, vacuolar iron transporter involved in the transfer of iron ions from the cytosol to the vacuole for intracellular iron storage. Plays an essential role in the development of blue coloration in cornflower petals. This is Vacuolar iron transporter from Centaurea cyanus (Garden cornflower).